The primary structure comprises 338 residues: Aspartate--ammonia ligase (338 aa).

This sequence belongs to the class-II aminoacyl-tRNA synthetase family. AsnA subfamily.

It is found in the cytoplasm. The catalysed reaction is L-aspartate + NH4(+) + ATP = L-asparagine + AMP + diphosphate + H(+). Its pathway is amino-acid biosynthesis; L-asparagine biosynthesis; L-asparagine from L-aspartate (ammonia route): step 1/1. The polypeptide is Aspartate--ammonia ligase (Lactobacillus delbrueckii subsp. bulgaricus (strain ATCC 11842 / DSM 20081 / BCRC 10696 / JCM 1002 / NBRC 13953 / NCIMB 11778 / NCTC 12712 / WDCM 00102 / Lb 14)).